The sequence spans 616 residues: Glycogenin-1 (616 aa).

Residues Leu10, Tyr16, and Arg95 each coordinate UDP. Residues Leu10, Tyr16, Arg95, Lys104, Asp120, Asp122, Asn158, Ser159, Asp185, Asp188, and Gln189 each contribute to the UDP-alpha-D-glucose site. 2 residues coordinate UDP: Asp120 and Asp122. Mn(2+) is bound by residues Asp120 and Asp122. Residue Tyr230 is glycosylated (O-linked (Glc...) tyrosine). UDP-binding residues include His247, Gly250, and Lys253. Residue His247 coordinates Mn(2+). The UDP-alpha-D-glucose site is built by Gly250 and Lys253. Residues 283-302 (HQLNNEVSKPKISDSDKTET) show a composition bias toward basic and acidic residues. 4 disordered regions span residues 283-320 (HQLN…PTTN), 335-354 (NQNA…NPVP), 371-525 (TNQP…EKDK), and 553-588 (RDAT…EMPN). Positions 377–386 (ESREYSKEND) are enriched in basic and acidic residues. A compositionally biased stretch (polar residues) spans 400 to 419 (SPPNSTQELNSSYSVVSTQA). Over residues 450-461 (STAASSNNNVSN) the composition is skewed to low complexity. Polar residues-rich tracts occupy residues 462–485 (QPDG…PSNP) and 492–503 (DNIQKPSVSTND). The span at 567 to 576 (DKQEDMKLTA) shows a compositional bias: basic and acidic residues. Residues 577-586 (EETNQPQQEM) are compositionally biased toward polar residues. A glycan (O-linked (Glc...) tyrosine) is linked at Tyr598.

This sequence belongs to the glycosyltransferase 8 family. Glycogenin subfamily. It depends on Mn(2+) as a cofactor.

It localises to the cytoplasm. The protein localises to the vacuole. The catalysed reaction is L-tyrosyl-[glycogenin] + UDP-alpha-D-glucose = alpha-D-glucosyl-L-tyrosyl-[glycogenin] + UDP + H(+). It catalyses the reaction [1,4-alpha-D-glucosyl](n)-L-tyrosyl-[glycogenin] + UDP-alpha-D-glucose = [1,4-alpha-D-glucosyl](n+1)-L-tyrosyl-[glycogenin] + UDP + H(+). Its function is as follows. Self-glucosylating initiator of glycogen synthesis. It catalyzes the formation of a short alpha (1,4)-glucosyl chain covalently attached via a glucose 1-O-tyrosyl linkage to internal tyrosine residues and these chains act as primers for the elongation reaction catalyzed by glycogen synthase. Capable of transferring glucosyl residues to unbound acceptors such as free oligoglucans or oligoglucan derivatives. The chain is Glycogenin-1 from Saccharomyces cerevisiae (strain ATCC 204508 / S288c) (Baker's yeast).